We begin with the raw amino-acid sequence, 326 residues long: GTP 3',8-cyclase (326 aa).

Positions 4-227 constitute a Radical SAM core domain; sequence KHERNINYMR…LTPQKNILGN (224 aa). Arg13 is a binding site for GTP. [4Fe-4S] cluster is bound by residues Cys20 and Cys24. Residue Tyr26 coordinates S-adenosyl-L-methionine. A [4Fe-4S] cluster-binding site is contributed by Cys27. Arg63 is a binding site for GTP. Residue Gly67 coordinates S-adenosyl-L-methionine. Thr94 is a binding site for GTP. S-adenosyl-L-methionine is bound at residue Ser118. Lys155 is a binding site for GTP. Met189 serves as a coordination point for S-adenosyl-L-methionine. [4Fe-4S] cluster contacts are provided by Cys253 and Cys256. 258 to 260 lines the GTP pocket; the sequence is RIR. Cys270 lines the [4Fe-4S] cluster pocket.

The protein belongs to the radical SAM superfamily. MoaA family. Monomer and homodimer. Requires [4Fe-4S] cluster as cofactor.

The catalysed reaction is GTP + AH2 + S-adenosyl-L-methionine = (8S)-3',8-cyclo-7,8-dihydroguanosine 5'-triphosphate + 5'-deoxyadenosine + L-methionine + A + H(+). It functions in the pathway cofactor biosynthesis; molybdopterin biosynthesis. In terms of biological role, catalyzes the cyclization of GTP to (8S)-3',8-cyclo-7,8-dihydroguanosine 5'-triphosphate. The polypeptide is GTP 3',8-cyclase (Syntrophomonas wolfei subsp. wolfei (strain DSM 2245B / Goettingen)).